Reading from the N-terminus, the 788-residue chain is Ciliated left-right organizer metallopeptidase (788 aa).

The first 20 residues, 1–20 (MLLLLLLLLLLPPLVLRVAA), serve as a signal peptide directing secretion. Residues 21–735 (SRCLHDETQK…DHNPSMTHLR (715 aa)) are Extracellular-facing. Over residues 40–56 (SQLPSKSRSSSLTLPSS) the composition is skewed to low complexity. Residues 40-59 (SQLPSKSRSSSLTLPSSRDP) are disordered. H305 provides a ligand contact to Zn(2+). E306 is an active-site residue. H309 contacts Zn(2+). Residue N333 is glycosylated (N-linked (GlcNAc...) asparagine). H385 provides a ligand contact to Zn(2+). N425, N491, N524, and N713 each carry an N-linked (GlcNAc...) asparagine glycan. Residues 736 to 756 (LSMGLCLMLLILVGVMGTTAY) form a helical membrane-spanning segment. The Cytoplasmic segment spans residues 757-788 (QKRATLPVRPSASYHSPELHSTRVPVRGIREV). The tract at residues 767-788 (SASYHSPELHSTRVPVRGIREV) is disordered.

Belongs to the peptidase M8 family. It depends on Zn(2+) as a cofactor.

Its subcellular location is the membrane. Functionally, putative metalloproteinase that plays a role in left-right patterning process. The protein is Ciliated left-right organizer metallopeptidase of Homo sapiens (Human).